We begin with the raw amino-acid sequence, 630 residues long: tRNA uridine 5-carboxymethylaminomethyl modification enzyme MnmG (630 aa).

13-18 (GGGHAG) provides a ligand contact to FAD. 273 to 287 (GPRYCPSIEDKIHRF) lines the NAD(+) pocket.

Belongs to the MnmG family. As to quaternary structure, homodimer. Heterotetramer of two MnmE and two MnmG subunits. FAD serves as cofactor.

The protein resides in the cytoplasm. NAD-binding protein involved in the addition of a carboxymethylaminomethyl (cmnm) group at the wobble position (U34) of certain tRNAs, forming tRNA-cmnm(5)s(2)U34. In Pseudomonas aeruginosa (strain ATCC 15692 / DSM 22644 / CIP 104116 / JCM 14847 / LMG 12228 / 1C / PRS 101 / PAO1), this protein is tRNA uridine 5-carboxymethylaminomethyl modification enzyme MnmG.